A 179-amino-acid polypeptide reads, in one-letter code: Bifunctional protein PyrR (179 aa).

Residues 97–109 carry the PRPP-binding motif; that stretch reads VILIDDVLFTGRT.

This sequence belongs to the purine/pyrimidine phosphoribosyltransferase family. PyrR subfamily.

It catalyses the reaction UMP + diphosphate = 5-phospho-alpha-D-ribose 1-diphosphate + uracil. Functionally, regulates the transcription of the pyrimidine nucleotide (pyr) operon in response to exogenous pyrimidines. Its function is as follows. Also displays a weak uracil phosphoribosyltransferase activity which is not physiologically significant. The chain is Bifunctional protein PyrR from Actinobacillus pleuropneumoniae serotype 5b (strain L20).